Reading from the N-terminus, the 258-residue chain is MKTPHKKATARQQTREIVDDHTLSASMRKKKISQKKQRGRPSSQTRRNIVGCRISHGWKEGDEPITQWKGTVLDQVPINPSLYLVKYDGIDCVYGLELHRDKRILKLKILPDKVPFSRVRDVHLANTIIGKAVEHMFEGEHGSKDGWRGMVLAQAPIMKAWFYITYEKDPVLYMYQLLDDYKEGDLHIMPESSKSSPKEREPEGVIDGLIGKHVEYTKEDGSKRTGKVIHQVKAKPSVYFIKFDDDFHIYVYDLVKKS.

Residues methionine 1 to arginine 47 are disordered. Basic and acidic residues predominate over residues glutamine 13 to threonine 22. The segment covering methionine 27 to glycine 39 has biased composition (basic residues). Tudor-like domain stretches follow at residues valine 50–histidine 99, isoleucine 129–leucine 178, and isoleucine 210–valine 255. Histone H3K4me3 and H3R8me2a binding stretches follow at residues glutamate 138 and aspartate 246–histidine 248.

The protein belongs to the SPIN/STSY family. In terms of assembly, interacts with C11orf84/SPINDOC.

The protein localises to the nucleus. Its function is as follows. May be involved in the regulation of cell cycle progression. Exhibits H3K4me3-binding activity. The protein is Spindlin-2 (SPIN2) of Bos taurus (Bovine).